The sequence spans 417 residues: Inactive cytochrome P450 76AD1 (417 aa).

The helical transmembrane segment at 4–24 (ATLAMILAIWFISFHFIKLLF) threads the bilayer.

This sequence belongs to the cytochrome P450 family.

Its subcellular location is the membrane. It functions in the pathway pigment biosynthesis; betalain biosynthesis. Its function is as follows. Inactive cytochrome unable to convert L-DOPA to cyclo-DOPA in the betalain pathway and producing a yellow mutant phenotype. A frameshift replaces 108 amino acids of the active protein found in red beets (AC I3PFJ5) with 27 new residues followed by a stop codon. This Beta vulgaris (Sugar beet) protein is Inactive cytochrome P450 76AD1.